The chain runs to 374 residues: Putative glutamate--cysteine ligase 2-2 (374 aa).

It belongs to the glutamate--cysteine ligase type 2 family. YbdK subfamily.

The catalysed reaction is L-cysteine + L-glutamate + ATP = gamma-L-glutamyl-L-cysteine + ADP + phosphate + H(+). Functionally, ATP-dependent carboxylate-amine ligase which exhibits weak glutamate--cysteine ligase activity. The protein is Putative glutamate--cysteine ligase 2-2 of Rhodococcus jostii (strain RHA1).